Consider the following 477-residue polypeptide: MANDKKLVESITSMDEDFAQWYTDVVKKAELVDYSGVRGCTIFRPAGYAIWENIQKELDARFKATGVENVYMPMFIPESLLNKEKDHVEGFAPEVAWVTHGGGEQLQERLCVRPTSETLFCDFYSHIIESYRDLPKLYNQWCSVVRWEKTTRPFLRTLEFLWQEGHTAHATAEEAEERTIQMLNLYADFCEEVLAIPMVRGRKTDKEKFAGAEATYTIEALMHDGKALQSGTSHNFGDGFAKAFNIQYTDKENKLQYVHQTSWGMTTRLIGALIMVHGDNSGLVLPPRIAPTQVVIVPIMQKKEGVLEKAAELREKLGAFRVKVDDSDKSPGWKFSEHEMRGIPVRVEIGPKDIEANQAVLVRRDTREKTVVSLDEIDTKIGEILEAMQKEMLERARNHRDAHTYEAHSTEEFADVVANKPGFVKAMWCGERACEDEIKEKTGATSRCMPFAQEHIADTCVCCGKQAKSLVYWGKAY.

It belongs to the class-II aminoacyl-tRNA synthetase family. ProS type 3 subfamily. In terms of assembly, homodimer.

It localises to the cytoplasm. It catalyses the reaction tRNA(Pro) + L-proline + ATP = L-prolyl-tRNA(Pro) + AMP + diphosphate. In terms of biological role, catalyzes the attachment of proline to tRNA(Pro) in a two-step reaction: proline is first activated by ATP to form Pro-AMP and then transferred to the acceptor end of tRNA(Pro). This chain is Proline--tRNA ligase, found in Lachnoclostridium phytofermentans (strain ATCC 700394 / DSM 18823 / ISDg) (Clostridium phytofermentans).